The following is a 308-amino-acid chain: Glycine--tRNA ligase alpha subunit (308 aa).

It belongs to the class-II aminoacyl-tRNA synthetase family. Tetramer of two alpha and two beta subunits.

The protein localises to the cytoplasm. It catalyses the reaction tRNA(Gly) + glycine + ATP = glycyl-tRNA(Gly) + AMP + diphosphate. This is Glycine--tRNA ligase alpha subunit from Brucella abortus (strain 2308).